The sequence spans 379 residues: Protein RecA (379 aa).

Residue 79-86 (GPESSGKT) coordinates ATP.

It belongs to the RecA family.

It is found in the cytoplasm. Can catalyze the hydrolysis of ATP in the presence of single-stranded DNA, the ATP-dependent uptake of single-stranded DNA by duplex DNA, and the ATP-dependent hybridization of homologous single-stranded DNAs. It interacts with LexA causing its activation and leading to its autocatalytic cleavage. The chain is Protein RecA from Streptococcus agalactiae.